Here is a 311-residue protein sequence, read N- to C-terminus: tRNA dimethylallyltransferase (311 aa).

10-17 (GPTASGKT) is an ATP binding site. Substrate is bound at residue 12–17 (TASGKT). Interaction with substrate tRNA stretches follow at residues 35 to 38 (DSAL), 159 to 163 (QRINR), and 240 to 245 (RCVGYR).

The protein belongs to the IPP transferase family. Monomer. The cofactor is Mg(2+).

The catalysed reaction is adenosine(37) in tRNA + dimethylallyl diphosphate = N(6)-dimethylallyladenosine(37) in tRNA + diphosphate. Functionally, catalyzes the transfer of a dimethylallyl group onto the adenine at position 37 in tRNAs that read codons beginning with uridine, leading to the formation of N6-(dimethylallyl)adenosine (i(6)A). In Haemophilus influenzae (strain 86-028NP), this protein is tRNA dimethylallyltransferase.